The following is a 460-amino-acid chain: Bifunctional protein GlmU (460 aa).

Residues 1-229 (MSKLNIVVLA…VWETTGVNSK (229 aa)) are pyrophosphorylase. UDP-N-acetyl-alpha-D-glucosamine-binding positions include 9 to 12 (LAAG), Lys23, Gln74, 79 to 80 (GT), 101 to 103 (YGD), Gly138, Glu154, Asn169, and Asn227. Asp103 contacts Mg(2+). Residue Asn227 participates in Mg(2+) binding. The interval 230-250 (VQLAGLERIYQTAQANKLLEQ) is linker. An N-acetyltransferase region spans residues 251–460 (GVALADPARI…RPVKKPKPKN (210 aa)). Residues Arg333 and Lys351 each coordinate UDP-N-acetyl-alpha-D-glucosamine. His363 functions as the Proton acceptor in the catalytic mechanism. The UDP-N-acetyl-alpha-D-glucosamine site is built by Tyr366 and Asn377. Acetyl-CoA contacts are provided by residues Ala380, 386–387 (NY), Ser405, Ala423, and Arg440.

This sequence in the N-terminal section; belongs to the N-acetylglucosamine-1-phosphate uridyltransferase family. The protein in the C-terminal section; belongs to the transferase hexapeptide repeat family. As to quaternary structure, homotrimer. Mg(2+) is required as a cofactor.

The protein resides in the cytoplasm. The catalysed reaction is alpha-D-glucosamine 1-phosphate + acetyl-CoA = N-acetyl-alpha-D-glucosamine 1-phosphate + CoA + H(+). The enzyme catalyses N-acetyl-alpha-D-glucosamine 1-phosphate + UTP + H(+) = UDP-N-acetyl-alpha-D-glucosamine + diphosphate. The protein operates within nucleotide-sugar biosynthesis; UDP-N-acetyl-alpha-D-glucosamine biosynthesis; N-acetyl-alpha-D-glucosamine 1-phosphate from alpha-D-glucosamine 6-phosphate (route II): step 2/2. Its pathway is nucleotide-sugar biosynthesis; UDP-N-acetyl-alpha-D-glucosamine biosynthesis; UDP-N-acetyl-alpha-D-glucosamine from N-acetyl-alpha-D-glucosamine 1-phosphate: step 1/1. It participates in bacterial outer membrane biogenesis; LPS lipid A biosynthesis. Functionally, catalyzes the last two sequential reactions in the de novo biosynthetic pathway for UDP-N-acetylglucosamine (UDP-GlcNAc). The C-terminal domain catalyzes the transfer of acetyl group from acetyl coenzyme A to glucosamine-1-phosphate (GlcN-1-P) to produce N-acetylglucosamine-1-phosphate (GlcNAc-1-P), which is converted into UDP-GlcNAc by the transfer of uridine 5-monophosphate (from uridine 5-triphosphate), a reaction catalyzed by the N-terminal domain. The polypeptide is Bifunctional protein GlmU (Nitrosospira multiformis (strain ATCC 25196 / NCIMB 11849 / C 71)).